We begin with the raw amino-acid sequence, 1270 residues long: DNA-directed RNA polymerase subunit beta (1270 aa).

Belongs to the RNA polymerase beta chain family. In terms of assembly, the RNAP catalytic core consists of 2 alpha, 1 beta, 1 beta' and 1 omega subunit. When a sigma factor is associated with the core the holoenzyme is formed, which can initiate transcription.

It carries out the reaction RNA(n) + a ribonucleoside 5'-triphosphate = RNA(n+1) + diphosphate. Its function is as follows. DNA-dependent RNA polymerase catalyzes the transcription of DNA into RNA using the four ribonucleoside triphosphates as substrates. The polypeptide is DNA-directed RNA polymerase subunit beta (Porphyromonas cangingivalis).